Here is a 563-residue protein sequence, read N- to C-terminus: Chitinase A (563 aa).

The N-terminal stretch at 1-23 (MRKFNKPLLALLIGSTLCSAAQA) is a signal peptide. The 402-residue stretch at 158 to 559 (KVVGSYFVEW…NSMNASLGNS (402 aa)) folds into the GH18 domain. Residue glutamate 315 is the Proton donor of the active site.

The protein belongs to the glycosyl hydrolase 18 family. Chitinase class II subfamily.

It catalyses the reaction Random endo-hydrolysis of N-acetyl-beta-D-glucosaminide (1-&gt;4)-beta-linkages in chitin and chitodextrins.. The polypeptide is Chitinase A (chiA) (Serratia marcescens).